Reading from the N-terminus, the 88-residue chain is Small ribosomal subunit protein bS20 (88 aa).

The disordered stretch occupies residues 1–26 (MANTAQARKRARQNTKRRQNSASQRS). Positions 7-19 (ARKRARQNTKRRQ) are enriched in basic residues.

This sequence belongs to the bacterial ribosomal protein bS20 family.

Its function is as follows. Binds directly to 16S ribosomal RNA. The sequence is that of Small ribosomal subunit protein bS20 from Psychrobacter cryohalolentis (strain ATCC BAA-1226 / DSM 17306 / VKM B-2378 / K5).